A 161-amino-acid polypeptide reads, in one-letter code: UPF0178 protein BR1979/BS1330_I1973 (161 aa).

Belongs to the UPF0178 family.

The protein is UPF0178 protein BR1979/BS1330_I1973 of Brucella suis biovar 1 (strain 1330).